We begin with the raw amino-acid sequence, 416 residues long: MSLSSKLSVQDLDLKDKRVFIRVDFNVPLDGKKITSNQRIVAALPTIKYVLEHHPRYVVLASHLGRPNGERNEKYSLAPVAKELQSLLGKDVTFLNDCVGPEVEAAVKASAPGSVILLENLRYHIEEEGSRKVDGQKVKASKEDVQKFRHELSSLADVYINDAFGTAHRAHSSMVGFDLPQRAAGFLLEKELKYFGKALENPTRPFLAILGGAKVADKIQLIDNLLDKVDSIIIGGGMAFTFKKVLENTEIGDSIFDKAGAEIVPKLMEKAKAKGVEVVLPVDFIIADAFSADANTKTVTDKEGIPAGWQGLDNGPESRKLFAATVAKAKTIVWNGPPGVFEFEKFAAGTKALLDEVVKSSAAGNTVIIGGGDTATVAKKYGVTDKISHVSTGGGASLELLEGKELPGVAFLSEKK.

At Ser2 the chain carries N-acetylserine. (2R)-3-phosphoglycerate contacts are provided by Val23, Asp24, Phe25, Asn26, Gln38, Arg39, Ser62, His63, Gly65, and Arg66. Lys82 is covalently cross-linked (Glycyl lysine isopeptide (Lys-Gly) (interchain with G-Cter in ubiquitin)). Thr93 is modified (phosphothreonine). Ser110 bears the Phosphoserine mark. 2 residues coordinate (2R)-3-phosphoglycerate: Leu121 and Arg122. Residues Ser130 and Ser154 each carry the phosphoserine modification. His168 and Arg169 together coordinate (2R)-3-phosphoglycerate. A Phosphoserine modification is found at Ser172. Lys197 participates in a covalent cross-link: Glycyl lysine isopeptide (Lys-Gly) (interchain with G-Cter in ubiquitin). Thr203 is subject to Phosphothreonine. Residue Gly212 coordinates ADP. Gly212 contributes to the CDP binding site. AMP is bound by residues Ala213 and Lys214. ATP-binding residues include Ala213 and Lys214. Ala213 contributes to the Mg(2+) binding site. Mg(2+) is bound by residues Ala216 and Asp217. A CDP-binding site is contributed by Asp217. Lys218 provides a ligand contact to AMP. Lys218 serves as a coordination point for ATP. An ADP-binding site is contributed by Gly236. Gly236 contacts CDP. Residue Gly237 coordinates AMP. Gly237 lines the ATP pocket. Thr241 carries the post-translational modification Phosphothreonine. Glycyl lysine isopeptide (Lys-Gly) (interchain with G-Cter in ubiquitin) cross-links involve residues Lys258 and Lys274. Thr298 is modified (phosphothreonine). Lys302 is covalently cross-linked (Glycyl lysine isopeptide (Lys-Gly) (interchain with G-Cter in ubiquitin)). Position 311 (Gly311) interacts with AMP. ATP is bound by residues Gly311 and Leu312. At Ser318 the chain carries Phosphoserine. The residue at position 331 (Thr331) is a Phosphothreonine. Asn335 is an ATP binding site. Residues Gly336 and Phe341 each contribute to the CDP site. Position 341 (Phe341) interacts with ADP. Glu342 provides a ligand contact to AMP. Glu342 contacts ATP. (2R)-3-phosphoglycerate is bound at residue Gly371. Residues Asp373 and Thr374 each coordinate ATP. Asp373 provides a ligand contact to Mg(2+). Thr392 bears the Phosphothreonine mark. (2R)-3-phosphoglycerate is bound by residues Gly394 and Gly395.

The protein belongs to the phosphoglycerate kinase family. As to quaternary structure, monomer. Requires Mg(2+) as cofactor.

It localises to the cytoplasm. The protein localises to the mitochondrion. It catalyses the reaction (2R)-3-phosphoglycerate + ATP = (2R)-3-phospho-glyceroyl phosphate + ADP. The protein operates within carbohydrate degradation; glycolysis; pyruvate from D-glyceraldehyde 3-phosphate: step 2/5. Its function is as follows. Catalyzes one of the two ATP producing reactions in the glycolytic pathway via the reversible conversion of 1,3-diphosphoglycerate to 3-phosphoglycerate. Both L- and D- forms of purine and pyrimidine nucleotides can be used as substrates, but the activity is much lower on pyrimidines. Negatively regulates the biosynthesis of acetyl-CoA from pyruvate in the mitochondrion. The protein is Phosphoglycerate kinase (PGK1) of Saccharomyces cerevisiae (strain ATCC 204508 / S288c) (Baker's yeast).